A 303-amino-acid chain; its full sequence is Olfactory receptor 4X2 (303 aa).

Topologically, residues 1 to 17 (MTEFIFLVLSPNQEVQR) are extracellular. The helical transmembrane segment at 18–41 (VCFVIFLFLYTAIVLGNFLIVLTV) threads the bilayer. Residues 42–49 (MTSRSLGS) are Cytoplasmic-facing. The helical transmembrane segment at 50 to 71 (PMYFFLSYLSFMEICYSSATAP) threads the bilayer. Residues 72–92 (KLISDLLAERKVISWWGCMAQ) lie on the Extracellular side of the membrane. C89 and C181 are joined by a disulfide. Residues 93 to 112 (LFFLHFFGGTEIFLLTVMAY) traverse the membrane as a helical segment. At 113–131 (DHYVAICKPLSYTTIMNWQ) the chain is on the cytoplasmic side. A helical membrane pass occupies residues 132 to 150 (VCTVLVGIAWVGGFMHSFA). Residues 151 to 187 (QILLIFHLLFCGPNVINHYFCDLVPLLKLACSDTFLI) lie on the Extracellular side of the membrane. Residues 188-211 (GLLIVANGGTLSVISFGVLLASYM) form a helical membrane-spanning segment. Residues 212 to 227 (VILLHLRTWSSEGWCK) are Cytoplasmic-facing. The helical transmembrane segment at 228 to 250 (ALSTCGSHFAVVILFFGPCVFNS) threads the bilayer. The Extracellular portion of the chain corresponds to 251–261 (LRPSTTLPIDK). Residues 262–281 (MVAVFYTVITAILNPVIYSL) traverse the membrane as a helical segment. The Cytoplasmic segment spans residues 282–303 (RNAEMRKAMKRLWIRTLRLNEK).

It belongs to the G-protein coupled receptor 1 family.

The protein resides in the cell membrane. Its function is as follows. Odorant receptor. This chain is Olfactory receptor 4X2 (OR4X2), found in Homo sapiens (Human).